Consider the following 198-residue polypeptide: Ion-translocating oxidoreductase complex subunit B (198 aa).

A hydrophobic region spans residues Met1–Ser28. Positions Glu34 to Val92 constitute a 4Fe-4S domain. Positions 51, 54, 59, 75, 115, 118, 121, 125, 145, 148, 151, and 155 each coordinate [4Fe-4S] cluster. 2 4Fe-4S ferredoxin-type domains span residues Met106–Lys135 and Ala136–Val165.

Belongs to the 4Fe4S bacterial-type ferredoxin family. RnfB subfamily. As to quaternary structure, the complex is composed of six subunits: RnfA, RnfB, RnfC, RnfD, RnfE and RnfG. [4Fe-4S] cluster serves as cofactor.

It localises to the cell inner membrane. In terms of biological role, part of a membrane-bound complex that couples electron transfer with translocation of ions across the membrane. This is Ion-translocating oxidoreductase complex subunit B from Pasteurella multocida (strain Pm70).